We begin with the raw amino-acid sequence, 162 residues long: Caveolin-2 (162 aa).

Residues 1–86 lie on the Cytoplasmic side of the membrane; it reads MGLETEKADV…FEISKYVIYK (86 aa). At Tyr-19 the chain carries Phosphotyrosine; by SRC. Phosphoserine is present on residues Ser-20 and Ser-23. Tyr-27 is modified (phosphotyrosine; by SRC). Ser-36 is modified (phosphoserine). The segment at residues 87 to 107 is an intramembrane region (helical); sequence FLTVFLAIPLAFIAGILFATL. Topologically, residues 108 to 162 are cytoplasmic; the sequence is SCLHIWILMPFVKTCLMVLPSVQTIWKSVTDVVIGPLCTSVGRIFSSVSMQLSHD.

This sequence belongs to the caveolin family. In terms of assembly, monomer or homodimer. Interacts with CAV1; the interaction forms a stable heterooligomeric complex that is required for targeting to lipid rafts and for caveolae formation. Tyrosine phosphorylated forms do not form heterooligomers with the Tyr-19-phosphorylated form existing as a monomer or dimer and the Tyr-27-form as a monomer only. Interacts (tyrosine phosphorylated form) with the SH2 domain-containing proteins, RASA1, NCK1 and SRC. Interacts (tyrosine phosphorylated form) with INSR; the interaction (Tyr-27-phosphorylated form) is increased on insulin stimulation. Interacts (Tyr-19-phosphorylated form) with MAPK1 (phosphorylated form); the interaction, promoted by insulin, leads to nuclear location and MAPK1 activation. Interacts with STAT3; the interaction is increased on insulin-induced tyrosine phosphorylation leading to STAT activation. Phosphorylated on serine and tyrosine residues. CAV1 promotes phosphorylation on Ser-23 which targets the complex to the plasma membrane, lipid rafts and caveolae. Phosphorylation on Ser-36 appears to modulate mitosis in endothelial cells. Phosphorylation on both Tyr-19 and Tyr-27 is required for insulin-induced 'Ser-727' phosphorylation of STAT3 and its activation. Phosphorylation on Tyr-19 is required for insulin-induced phosphorylation of MAPK1 and DNA binding of STAT3. Tyrosine phosphorylation is induced by both EGF and insulin. As to expression, in the retina, mainly expressed in vessels, but also diffuse expression in the inner and outer plexiform layers and in the inner nuclear layer.

The protein resides in the nucleus. It localises to the cytoplasm. The protein localises to the golgi apparatus membrane. It is found in the cell membrane. Its subcellular location is the membrane. The protein resides in the caveola. In terms of biological role, may act as a scaffolding protein within caveolar membranes. Interacts directly with G-protein alpha subunits and can functionally regulate their activity. Acts as an accessory protein in conjunction with CAV1 in targeting to lipid rafts and driving caveolae formation. The Ser-36 phosphorylated form has a role in modulating mitosis in endothelial cells. Positive regulator of cellular mitogenesis of the MAPK signaling pathway. Required for the insulin-stimulated nuclear translocation and activation of MAPK1 and STAT3, and the subsequent regulation of cell cycle progression. This Rattus norvegicus (Rat) protein is Caveolin-2 (Cav2).